The chain runs to 628 residues: Modular serine protease (628 aa).

The first 25 residues, 1-25 (MQLISFLSNPLFFCALLLKFRTIFA), serve as a signal peptide directing secretion. LDL-receptor class A domains follow at residues 26 to 64 (ACDS…LTCV), 69 to 107 (HCTK…LRCG), 122 to 163 (NCKE…ELCG), and 166 to 204 (ECPA…LLCN). Intrachain disulfides connect Cys27-Cys39, Cys34-Cys52, Cys46-Cys63, Cys70-Cys82, Cys77-Cys95, Cys89-Cys106, Cys123-Cys135, Cys130-Cys149, Cys143-Cys162, Cys167-Cys179, Cys174-Cys192, and Cys186-Cys203. A glycan (N-linked (GlcNAc...) asparagine) is linked at Asn36. Asn204 carries an N-linked (GlcNAc...) asparagine glycan. Sushi domains follow at residues 222–285 (LGCP…KCVK) and 300–356 (ALCT…RCEQ). 4 disulfides stabilise this stretch: Cys224–Cys270, Cys256–Cys283, Cys302–Cys341, and Cys326–Cys354. The Peptidase S1 domain maps to 369-621 (SSGGYTINNT…FEDMILNAMN (253 aa)). The N-linked (GlcNAc...) asparagine glycan is linked to Asn376. Residues Cys399 and Cys415 are joined by a disulfide bond. Catalysis depends on charge relay system residues His414, Asp472, and Ser563. N-linked (GlcNAc...) asparagine glycosylation is present at Asn621.

It belongs to the peptidase S1 family. May be proteolytically cleaved via an autocatalytic mechanism.

The protein resides in the secreted. Functionally, serine protease that plays a key role in innate immunity by activating the Toll pathway in response to infection with Gram-positive bacteria and fungi. During Gram-positive infection, acts downstream of PGRP-SA and upstream of Grass and Spz, and therefore appears to function in a pathway that links detection of Gram-positive lysine-type peptidoglycans to Toll activation. Functions in a separate pathway to the psh-mediated activation of the Toll pathway. The protein is Modular serine protease of Drosophila melanogaster (Fruit fly).